The sequence spans 130 residues: Immunoglobulin kappa chain variable 9-120 (130 aa).

The N-terminal stretch at 1–22 (MDMRAPAQIFGFLLLLFQGTRC) is a signal peptide. The interval 23–45 (DIQMTQSPSSLSASLGERVSLTC) is framework-1. A disulfide bridge links Cys45 with Cys110. Positions 46 to 56 (RASQDIGSSLN) are complementarity-determining-1. The segment at 57-71 (WLQQEPDGTIKRLIY) is framework-2. The complementarity-determining-2 stretch occupies residues 72-78 (ATSSLDS). Residues 79 to 110 (GVPKRFSGSRSGSDYSLTISSLESEDFVDYYC) are framework-3. The segment at 111-119 (LQYASSPWT) is complementarity-determining-3. Residues 120–129 (FGGGTKLEIK) are framework-4.

This Mus musculus (Mouse) protein is Immunoglobulin kappa chain variable 9-120.